Reading from the N-terminus, the 374-residue chain is Anhydro-N-acetylmuramic acid kinase (374 aa).

ATP is bound at residue 12–19 (GTSLDGID).

Belongs to the anhydro-N-acetylmuramic acid kinase family.

The catalysed reaction is 1,6-anhydro-N-acetyl-beta-muramate + ATP + H2O = N-acetyl-D-muramate 6-phosphate + ADP + H(+). Its pathway is amino-sugar metabolism; 1,6-anhydro-N-acetylmuramate degradation. The protein operates within cell wall biogenesis; peptidoglycan recycling. Catalyzes the specific phosphorylation of 1,6-anhydro-N-acetylmuramic acid (anhMurNAc) with the simultaneous cleavage of the 1,6-anhydro ring, generating MurNAc-6-P. Is required for the utilization of anhMurNAc either imported from the medium or derived from its own cell wall murein, and thus plays a role in cell wall recycling. This chain is Anhydro-N-acetylmuramic acid kinase, found in Klebsiella pneumoniae subsp. pneumoniae (strain ATCC 700721 / MGH 78578).